The sequence spans 183 residues: ATP synthase subunit delta (183 aa).

The protein belongs to the ATPase delta chain family. As to quaternary structure, F-type ATPases have 2 components, F(1) - the catalytic core - and F(0) - the membrane proton channel. F(1) has five subunits: alpha(3), beta(3), gamma(1), delta(1), epsilon(1). F(0) has three main subunits: a(1), b(2) and c(10-14). The alpha and beta chains form an alternating ring which encloses part of the gamma chain. F(1) is attached to F(0) by a central stalk formed by the gamma and epsilon chains, while a peripheral stalk is formed by the delta and b chains.

It localises to the cell inner membrane. Functionally, f(1)F(0) ATP synthase produces ATP from ADP in the presence of a proton or sodium gradient. F-type ATPases consist of two structural domains, F(1) containing the extramembraneous catalytic core and F(0) containing the membrane proton channel, linked together by a central stalk and a peripheral stalk. During catalysis, ATP synthesis in the catalytic domain of F(1) is coupled via a rotary mechanism of the central stalk subunits to proton translocation. In terms of biological role, this protein is part of the stalk that links CF(0) to CF(1). It either transmits conformational changes from CF(0) to CF(1) or is implicated in proton conduction. The protein is ATP synthase subunit delta of Desulfatibacillum aliphaticivorans.